The primary structure comprises 2054 residues: Multiple PDZ domain protein (2054 aa).

Residues 3-63 enclose the L27 domain; that stretch reads ETIDKNRALQ…SLQQLKDQVN (61 aa). The PDZ 1 domain maps to 138–225; that stretch reads IFELLKPPCG…TIQLVIARGS (88 aa). S231 bears the Phosphoserine mark. 4 PDZ domains span residues 258–338, 377–463, 545–626, and 692–778; these read TIEL…ARGA, DVEL…MRKG, VAHV…CRRT, and AIEL…VAKP. S782 and S1065 each carry phosphoserine. One can recognise a PDZ 6 domain in the interval 995-1076; that stretch reads TVTIAKGSSS…IGPDIKITYV (82 aa). The segment at 1110–1129 is disordered; it reads PELPEREEGEGEESELQNAA. One can recognise a PDZ 7 domain in the interval 1138 to 1230; the sequence is RVELWREPSK…PVVFMVQSIV (93 aa). R1157 carries the post-translational modification Omega-N-methylarginine. Residues 1261–1273 show a composition bias toward polar residues; that stretch reads LQLTSDKAPSQSE. The segment at 1261 to 1312 is disordered; sequence LQLTSDKAPSQSESESEKATLCSVPSSSPSVFSEMSSDYAQPSATTVAEDED. A compositionally biased stretch (low complexity) spans 1283-1297; sequence SVPSSSPSVFSEMSS. The PDZ 8 domain occupies 1337 to 1420; sequence MIELEKGHSG…KVKIIFIRNA (84 aa). The tract at residues 1433–1454 is disordered; sequence AADPLPSTSESPQNKEVEPSIT. In terms of domain architecture, PDZ 9 spans 1470 to 1551; it reads HLELPKDQGG…TVKLTVGAEN (82 aa). Residues 1560–1594 form a disordered region; sequence AAVTASGERKDSSQTPAVPAPDLEPIPSTSRSSTP. 2 consecutive PDZ domains span residues 1613–1696 and 1709–1791; these read TIEI…YRDE and TVEL…GRIK. Residues 1795-1834 are disordered; it reads FHSERRPSQSSQVSESSLSSFSLPRSGIHTSESSESSAKK. A phosphoserine mark is found at S1802 and S1808. The span at 1802–1834 shows a compositional bias: low complexity; the sequence is SQSSQVSESSLSSFSLPRSGIHTSESSESSAKK. PDZ domains follow at residues 1846-1932 and 1971-2054; these read TVEI…VAGG and TITL…MVLS.

As to quaternary structure, interacts with F11R/JAM, CLDN1, NG2, CXADR, CRB1, MPP4 and PALS1, HTR2A, HTR2B, PLEKHA1/TAPP1 and PLEKHA2/TAPP2. Interacts with CXADR. Interacts with HTR2C, CLDN5, DLG4, GRIN1, SYNGAP1, CAMK2A and CAMK2B. Interacts with FAT4 (via cytoplasmic domain). Interacts with DLL1. As to expression, abundant in all cerebral cortical layers, especially the piriform cortex, the pyramidal cells of the CA1-CA3 subfields of the hippocampus, as well as the granular layer of the dentate gyrus. Detected in the internal granular layer and the mitral cell layer of the olfactory bulb; in the medial habenular nucleus; and in amygdaloid, thalamic, hypothalamic, and pontine nuclei. In the cerebellum, found at high levels in the granular layer. Detected in the lateral ventricle. Expression overlaps with 5-HT2C receptor expression in all regions of the brain including the choroid plexus, where 5-HT2C receptors are highly enriched.

The protein resides in the endomembrane system. The protein localises to the cell junction. It is found in the tight junction. Its subcellular location is the synapse. It localises to the apical cell membrane. The protein resides in the postsynaptic density. The protein localises to the cell projection. It is found in the dendrite. Its subcellular location is the synaptosome. Member of the NMDAR signaling complex that may play a role in control of AMPAR potentiation and synaptic plasticity in excitatory synapses. Promotes clustering of HT2RC at the cell surface. The protein is Multiple PDZ domain protein (Mpdz) of Rattus norvegicus (Rat).